The sequence spans 597 residues: C4b-binding protein alpha chain (597 aa).

An N-terminal signal peptide occupies residues 1-48; sequence MHPPKTPSGALHRKRKMAAWPFSRLWKVSDPILFQMTLIAALLPAVLG. Sushi domains lie at 49–110, 111–172, 173–236, 237–296, 297–362, 363–424, 425–482, and 483–540; these read NCGP…FCIY, KRCR…QCEI, VKCK…TCEK, ITCR…ACEP, NSCI…GCEA, LCCP…SCGD, ICNF…QCKA, and LCRK…KCEW. Cystine bridges form between C50/C96, C81/C108, C113/C154, C140/C170, C175/C217, C203/C234, C239/C281, C267/C294, C299/C348, C332/C360, C365/C409, C399/C422, C426/C468, C454/C480, C484/C525, and C511/C538. N221 carries N-linked (GlcNAc...) asparagine glycosylation. Residues N506 and N528 are each glycosylated (N-linked (GlcNAc...) asparagine).

As to quaternary structure, disulfide-linked complex of alpha and beta chains of 3 possible sorts: a 570 kDa complex of 7 alpha chains and 1 beta chain, a 530 kDa homoheptamer of alpha chains or a 500 kDa complex of 6 alpha chains and 1 beta chain. The central body of the alpha chain homomer supports tentacles, each with the binding site for C4b at the end. (Microbial infection) Interacts with Staphylococcus aureus protein SdrE; this interaction inhibits complement-mediated bacterial opsonization. In terms of tissue distribution, chylomicrons in the plasma.

The protein localises to the secreted. Functionally, controls the classical pathway of complement activation. It binds as a cofactor to C3b/C4b inactivator (C3bINA), which then hydrolyzes the complement fragment C4b. It also accelerates the degradation of the C4bC2a complex (C3 convertase) by dissociating the complement fragment C2a. Alpha chain binds C4b. It also interacts with anticoagulant protein S and with serum amyloid P component. The polypeptide is C4b-binding protein alpha chain (C4BPA) (Homo sapiens (Human)).